Reading from the N-terminus, the 359-residue chain is Glycerol-3-phosphate dehydrogenase [NAD(P)+] (359 aa).

The NADPH site is built by threonine 11, tryptophan 12, arginine 32, and lysine 107. Residues lysine 107 and glycine 138 each coordinate sn-glycerol 3-phosphate. Alanine 142 is a binding site for NADPH. 5 residues coordinate sn-glycerol 3-phosphate: lysine 193, aspartate 246, serine 256, arginine 257, and asparagine 258. Lysine 193 serves as the catalytic Proton acceptor. Arginine 257 contributes to the NADPH binding site. NADPH-binding residues include valine 281 and glutamate 283.

Belongs to the NAD-dependent glycerol-3-phosphate dehydrogenase family.

Its subcellular location is the cytoplasm. It carries out the reaction sn-glycerol 3-phosphate + NAD(+) = dihydroxyacetone phosphate + NADH + H(+). The enzyme catalyses sn-glycerol 3-phosphate + NADP(+) = dihydroxyacetone phosphate + NADPH + H(+). Its pathway is membrane lipid metabolism; glycerophospholipid metabolism. In terms of biological role, catalyzes the reduction of the glycolytic intermediate dihydroxyacetone phosphate (DHAP) to sn-glycerol 3-phosphate (G3P), the key precursor for phospholipid synthesis. The chain is Glycerol-3-phosphate dehydrogenase [NAD(P)+] from Dehalococcoides mccartyi (strain ATCC BAA-2100 / JCM 16839 / KCTC 5957 / BAV1).